A 425-amino-acid chain; its full sequence is MNLYNIKHPEEQVTFSQAVRQGLGRDQGLFFPEVIPQLNNINELLELPLVERSQKILGALIDGELPQATLDAMVKNAFTFPAPLEKVEENIYALELFHGPTLAFKDFGGRFMAQALAAVRGDGKITILTATSGDTGAAVAHAFYGLENINVVILYPKGKISPLQEKLFCTLGGNIRTVAINADFDACQALVKQAFDDVELRQAIGLNSANSINISRLLAQVCYYFEAVAQLPKEKRDNVVVSVPSGNFGNLTAGLIAKTLGLPIKRFVASTNANDTVPRYLKSGNWDPKTTVATLSNAMDVSRPNNWPRVEELFKRNGWDLTDLGSGMLSDSETEDTLKAMQSKGYLCEPHGAIAYQVLKDQLKASETGIFLCTAHPAKFKESVERILGIQLPLPETLDKHNQLPLLSDEMDNDFAQLRAYLLKS.

Lysine 105 carries the post-translational modification N6-(pyridoxal phosphate)lysine.

Belongs to the threonine synthase family. The cofactor is pyridoxal 5'-phosphate.

The catalysed reaction is O-phospho-L-homoserine + H2O = L-threonine + phosphate. Its pathway is amino-acid biosynthesis; L-threonine biosynthesis; L-threonine from L-aspartate: step 5/5. In terms of biological role, catalyzes the gamma-elimination of phosphate from L-phosphohomoserine and the beta-addition of water to produce L-threonine. In Haemophilus influenzae (strain ATCC 51907 / DSM 11121 / KW20 / Rd), this protein is Threonine synthase (thrC).